The following is a 130-amino-acid chain: Ribosome-binding factor A (130 aa).

The disordered stretch occupies residues 111–130 (RDLDDVGPEATSSDEDAEQR).

The protein belongs to the RbfA family. In terms of assembly, monomer. Binds 30S ribosomal subunits, but not 50S ribosomal subunits or 70S ribosomes.

It localises to the cytoplasm. One of several proteins that assist in the late maturation steps of the functional core of the 30S ribosomal subunit. Associates with free 30S ribosomal subunits (but not with 30S subunits that are part of 70S ribosomes or polysomes). Required for efficient processing of 16S rRNA. May interact with the 5'-terminal helix region of 16S rRNA. This is Ribosome-binding factor A from Xanthomonas euvesicatoria pv. vesicatoria (strain 85-10) (Xanthomonas campestris pv. vesicatoria).